A 340-amino-acid polypeptide reads, in one-letter code: Anthranilate phosphoribosyltransferase (340 aa).

Residues Gly-84, 87–88 (GD), Thr-92, 94–97 (NIST), 112–120 (KHGSRSVSS), and Ser-124 contribute to the 5-phospho-alpha-D-ribose 1-diphosphate site. Residue Gly-84 participates in anthranilate binding. Ser-96 contributes to the Mg(2+) binding site. Arg-170 provides a ligand contact to anthranilate. Positions 228 and 229 each coordinate Mg(2+).

The protein belongs to the anthranilate phosphoribosyltransferase family. Homodimer. It depends on Mg(2+) as a cofactor.

It carries out the reaction N-(5-phospho-beta-D-ribosyl)anthranilate + diphosphate = 5-phospho-alpha-D-ribose 1-diphosphate + anthranilate. It participates in amino-acid biosynthesis; L-tryptophan biosynthesis; L-tryptophan from chorismate: step 2/5. Functionally, catalyzes the transfer of the phosphoribosyl group of 5-phosphorylribose-1-pyrophosphate (PRPP) to anthranilate to yield N-(5'-phosphoribosyl)-anthranilate (PRA). This Psychromonas ingrahamii (strain DSM 17664 / CCUG 51855 / 37) protein is Anthranilate phosphoribosyltransferase.